Consider the following 26-residue polypeptide: Mucus envelope protein (26 aa).

Glycosylated. As to expression, produced by the opercular gland in the gill cavity and secreted as part of the mucus cocoon.

Its subcellular location is the secreted. In terms of biological role, exhibits antibacterial activity. May play a role in protection against parasite settlement. The chain is Mucus envelope protein from Scarus vetula (Queen parrotfish).